The sequence spans 79 residues: Cytochrome b (79 aa).

Helical transmembrane passes span 1-7, 31-52, and 67-79; these read SALFLAM, WLIRYMHANGSSLFFICLYLHI, and WNIGIILLFLTMA. Heme b contacts are provided by His37 and His51.

This sequence belongs to the cytochrome b family. The cytochrome bc1 complex contains 11 subunits: 3 respiratory subunits (MT-CYB, CYC1 and UQCRFS1), 2 core proteins (UQCRC1 and UQCRC2) and 6 low-molecular weight proteins (UQCRH/QCR6, UQCRB/QCR7, UQCRQ/QCR8, UQCR10/QCR9, UQCR11/QCR10 and a cleavage product of UQCRFS1). This cytochrome bc1 complex then forms a dimer. Heme b serves as cofactor.

The protein localises to the mitochondrion inner membrane. Functionally, component of the ubiquinol-cytochrome c reductase complex (complex III or cytochrome b-c1 complex) that is part of the mitochondrial respiratory chain. The b-c1 complex mediates electron transfer from ubiquinol to cytochrome c. Contributes to the generation of a proton gradient across the mitochondrial membrane that is then used for ATP synthesis. The polypeptide is Cytochrome b (MT-CYB) (Dipodomys californicus (California kangaroo rat)).